The sequence spans 2298 residues: Protein Ycf2 (2298 aa).

1640–1647 (GSIGTGRS) contacts ATP.

This sequence belongs to the Ycf2 family.

Its subcellular location is the plastid. The protein localises to the chloroplast stroma. Its function is as follows. Probable ATPase of unknown function. Its presence in a non-photosynthetic plant (Epifagus virginiana) and experiments in tobacco indicate that it has an essential function which is probably not related to photosynthesis. The protein is Protein Ycf2 of Carica papaya (Papaya).